A 562-amino-acid polypeptide reads, in one-letter code: Bacillolysin (562 aa).

Residues 1-24 (MKKKKQALKVLLSVGILSSSFAFA) form the signal peptide. A propeptide spans 25–245 (HTSSAAPNNV…KQAAKPAAKP (221 aa)) (activation peptide). Positions 303, 305, and 384 each coordinate Ca(2+). H388 is a Zn(2+) binding site. Residue E389 is part of the active site. H392 and E412 together coordinate Zn(2+). E423, N429, D431, E433, E436, Y439, T440, and D446 together coordinate Ca(2+). Residue H477 is the Proton donor of the active site.

Belongs to the peptidase M4 family. Ca(2+) is required as a cofactor. Requires Zn(2+) as cofactor.

It is found in the secreted. It catalyses the reaction Similar, but not identical, to that of thermolysin.. Functionally, extracellular zinc metalloprotease. In Priestia megaterium (strain ATCC 14581 / DSM 32 / CCUG 1817 / JCM 2506 / NBRC 15308 / NCIMB 9376 / NCTC 10342 / NRRL B-14308 / VKM B-512 / Ford 19) (Bacillus megaterium), this protein is Bacillolysin.